The following is a 176-amino-acid chain: Late lactation protein (176 aa).

The N-terminal stretch at 1–18 is a signal peptide; sequence MKVLFFTIALSLFSILHA. Residues C78 and C171 are joined by a disulfide bond.

It belongs to the calycin superfamily. Lipocalin family. Mammary gland. Secreted in milk.

It localises to the secreted. In terms of biological role, probably serves a role in the transport of a small ligand released during the hydrolysis of milk fat. This is Late lactation protein from Trichosurus vulpecula (Brush-tailed possum).